The chain runs to 100 residues: Protein Tat (100 aa).

The interval 1 to 20 (MEPVNPSLEPWKHPGSQPKT) is disordered. The interval 1 to 24 (MEPVNPSLEPWKHPGSQPKTACTN) is interaction with human CREBBP. The interval 1–48 (MEPVNPSLEPWKHPGSQPKTACTNCYCKKCCFHCQACFITKGLGISYG) is transactivation. 3 residues coordinate Zn(2+): C22, C25, and C27. Positions 22-37 (CTNCYCKKCCFHCQAC) are cysteine-rich. K28 is subject to N6-acetyllysine; by host PCAF. Residues C30, H33, C34, and C37 each coordinate Zn(2+). The core stretch occupies residues 38–48 (FITKGLGISYG). Residues 47 to 100 (YGRKKRRQRRRPPQDSQTHQVSLSKPSSQPRGDPTGPKEQKKKVERETETDPVH) are disordered. Basic residues predominate over residues 48-57 (GRKKRRQRRR). Residues 49-57 (RKKRRQRRR) carry the Nuclear localization signal, RNA-binding (TAR), and protein transduction motif. The interval 49 to 85 (RKKRRQRRRPPQDSQTHQVSLSKPSSQPRGDPTGPKE) is interaction with the host capping enzyme RNGTT. An N6-acetyllysine; by host EP300 and GCN5L2 mark is found at K50 and K51. An asymmetric dimethylarginine; by host PRMT6 mark is found at R52 and R53. The segment covering 61-76 (DSQTHQVSLSKPSSQP) has biased composition (polar residues). Residue K71 forms a Glycyl lysine isopeptide (Lys-Gly) (interchain with G-Cter in ubiquitin) linkage. The Cell attachment site motif lies at 77–79 (RGD). Residues 82 to 100 (GPKEQKKKVERETETDPVH) are compositionally biased toward basic and acidic residues.

The protein belongs to the lentiviruses Tat family. Interacts with host CCNT1. Associates with the P-TEFb complex composed at least of Tat, P-TEFb (CDK9 and CCNT1), TAR RNA, RNA Pol II. Recruits the HATs CREBBP, TAF1/TFIID, EP300, PCAF and GCN5L2. Interacts with host KAT5/Tip60; this interaction targets the latter to degradation. Interacts with the host deacetylase SIRT1. Interacts with host capping enzyme RNGTT; this interaction stimulates RNGTT. Binds to host KDR, and to the host integrins ITGAV/ITGB3 and ITGA5/ITGB1. Interacts with host KPNB1/importin beta-1 without previous binding to KPNA1/importin alpha-1. Interacts with EIF2AK2. Interacts with host nucleosome assembly protein NAP1L1; this interaction may be required for the transport of Tat within the nucleus, since the two proteins interact at the nuclear rim. Interacts with host C1QBP/SF2P32; this interaction involves lysine-acetylated Tat. Interacts with the host chemokine receptors CCR2, CCR3 and CXCR4. Interacts with host DPP4/CD26; this interaction may trigger an anti-proliferative effect. Interacts with host LDLR. Interacts with the host extracellular matrix metalloproteinase MMP1. Interacts with host PRMT6; this interaction mediates Tat's methylation. Interacts with, and is ubiquitinated by MDM2/Hdm2. Interacts with host PSMC3 and HTATIP2. Interacts with STAB1; this interaction may overcome SATB1-mediated repression of IL2 and IL2RA (interleukin) in T cells by binding to the same domain than HDAC1. Interacts (when acetylated) with human CDK13, thereby increasing HIV-1 mRNA splicing and promoting the production of the doubly spliced HIV-1 protein Nef. Interacts with host TBP; this interaction modulates the activity of transcriptional pre-initiation complex. Interacts with host RELA. Interacts with host PLSCR1; this interaction negatively regulates Tat transactivation activity by altering its subcellular distribution. Asymmetrical arginine methylation by host PRMT6 seems to diminish the transactivation capacity of Tat and affects the interaction with host CCNT1. In terms of processing, acetylation by EP300, CREBBP, GCN5L2/GCN5 and PCAF regulates the transactivation activity of Tat. EP300-mediated acetylation of Lys-50 promotes dissociation of Tat from the TAR RNA through the competitive binding to PCAF's bromodomain. In addition, the non-acetylated Tat's N-terminus can also interact with PCAF. PCAF-mediated acetylation of Lys-28 enhances Tat's binding to CCNT1. Lys-50 is deacetylated by SIRT1. Post-translationally, polyubiquitination by host MDM2 does not target Tat to degradation, but activates its transactivation function and fosters interaction with CCNT1 and TAR RNA. Phosphorylated by EIF2AK2 on serine and threonine residues adjacent to the basic region important for TAR RNA binding and function. Phosphorylation of Tat by EIF2AK2 is dependent on the prior activation of EIF2AK2 by dsRNA.

Its subcellular location is the host nucleus. It is found in the host nucleolus. The protein resides in the host cytoplasm. It localises to the secreted. Its function is as follows. Transcriptional activator that increases RNA Pol II processivity, thereby increasing the level of full-length viral transcripts. Recognizes a hairpin structure at the 5'-LTR of the nascent viral mRNAs referred to as the transactivation responsive RNA element (TAR) and recruits the cyclin T1-CDK9 complex (P-TEFb complex) that will in turn hyperphosphorylate the RNA polymerase II to allow efficient elongation. The CDK9 component of P-TEFb and other Tat-activated kinases hyperphosphorylate the C-terminus of RNA Pol II that becomes stabilized and much more processive. Other factors such as HTATSF1/Tat-SF1, SUPT5H/SPT5, and HTATIP2 are also important for Tat's function. Besides its effect on RNA Pol II processivity, Tat induces chromatin remodeling of proviral genes by recruiting the histone acetyltransferases (HATs) CREBBP, EP300 and PCAF to the chromatin. This also contributes to the increase in proviral transcription rate, especially when the provirus integrates in transcriptionally silent region of the host genome. To ensure maximal activation of the LTR, Tat mediates nuclear translocation of NF-kappa-B by interacting with host RELA. Through its interaction with host TBP, Tat may also modulate transcription initiation. Tat can reactivate a latently infected cell by penetrating in it and transactivating its LTR promoter. In the cytoplasm, Tat is thought to act as a translational activator of HIV-1 mRNAs. Extracellular circulating Tat can be endocytosed by surrounding uninfected cells via the binding to several surface receptors such as CD26, CXCR4, heparan sulfate proteoglycans (HSPG) or LDLR. Neurons are rarely infected, but they internalize Tat via their LDLR. Through its interaction with nuclear HATs, Tat is potentially able to control the acetylation-dependent cellular gene expression. Modulates the expression of many cellular genes involved in cell survival, proliferation or in coding for cytokines or cytokine receptors. Tat plays a role in T-cell and neurons apoptosis. Tat induced neurotoxicity and apoptosis probably contribute to neuroAIDS. Circulating Tat also acts as a chemokine-like and/or growth factor-like molecule that binds to specific receptors on the surface of the cells, affecting many cellular pathways. In the vascular system, Tat binds to ITGAV/ITGB3 and ITGA5/ITGB1 integrins dimers at the surface of endothelial cells and competes with bFGF for heparin-binding sites, leading to an excess of soluble bFGF. The sequence is that of Protein Tat from Homo sapiens (Human).